A 765-amino-acid chain; its full sequence is LPS-assembly protein LptD (765 aa).

The signal sequence occupies residues 1–18 (MQIRYFLALSLLPQLVLA).

This sequence belongs to the LptD family. As to quaternary structure, component of the lipopolysaccharide transport and assembly complex. Interacts with LptE and LptA.

It localises to the cell outer membrane. Functionally, together with LptE, is involved in the assembly of lipopolysaccharide (LPS) at the surface of the outer membrane. In Shewanella sp. (strain MR-4), this protein is LPS-assembly protein LptD.